Here is a 248-residue protein sequence, read N- to C-terminus: UDP-2,3-diacylglucosamine hydrolase (248 aa).

Asp-7, His-9, Asp-40, Asn-78, and His-113 together coordinate Mn(2+). 78 to 79 provides a ligand contact to substrate; sequence NR. The substrate site is built by Asp-121, Ser-159, Thr-163, Lys-166, and His-194. Mn(2+)-binding residues include His-194 and His-196.

The protein belongs to the LpxH family. It depends on Mn(2+) as a cofactor.

Its subcellular location is the cell inner membrane. It catalyses the reaction UDP-2-N,3-O-bis[(3R)-3-hydroxytetradecanoyl]-alpha-D-glucosamine + H2O = 2-N,3-O-bis[(3R)-3-hydroxytetradecanoyl]-alpha-D-glucosaminyl 1-phosphate + UMP + 2 H(+). It participates in glycolipid biosynthesis; lipid IV(A) biosynthesis; lipid IV(A) from (3R)-3-hydroxytetradecanoyl-[acyl-carrier-protein] and UDP-N-acetyl-alpha-D-glucosamine: step 4/6. In terms of biological role, hydrolyzes the pyrophosphate bond of UDP-2,3-diacylglucosamine to yield 2,3-diacylglucosamine 1-phosphate (lipid X) and UMP by catalyzing the attack of water at the alpha-P atom. Involved in the biosynthesis of lipid A, a phosphorylated glycolipid that anchors the lipopolysaccharide to the outer membrane of the cell. The protein is UDP-2,3-diacylglucosamine hydrolase of Pseudomonas savastanoi pv. phaseolicola (strain 1448A / Race 6) (Pseudomonas syringae pv. phaseolicola (strain 1448A / Race 6)).